The following is a 372-amino-acid chain: MDSVIQEAKRVIIKVGSSLVTNDGKGLDANAIQKWAAQIAQLRALGKEVVLVSSGAIVEGMQRLGFDKRPVGIHELQACAAVGQMGLAQIYETSFRQHDVRTAQILLTHADLADRERYLNARSTLFTLLRLGVVPIINENDTVVTDEIKFGDNDTLGALVANLIEADALIILTDQRGLFSADPRKDPNAVFIHEAKAGDLKLEAMAGGAGSSLGRGGMLTKILAAKRAAFSGAHTVIAWGREDNVLTRLAGGEAIGTQLTAQTAQLTARKQWMADHLQTAGAVVLDNGAVQKLTAEGKSLLPIGVTDVSGSFGRGDVITCIDQGGRAVARGISNYASSDARRIMRKPSADIAAILGFVEEPELIHRDNLVLL.

K14 contributes to the ATP binding site. The substrate site is built by S54, D141, and N153. Position 173-174 (173-174) interacts with ATP; that stretch reads TD. Residues 280 to 358 form the PUA domain; the sequence is AGAVVLDNGA…ADIAAILGFV (79 aa).

It belongs to the glutamate 5-kinase family.

Its subcellular location is the cytoplasm. It catalyses the reaction L-glutamate + ATP = L-glutamyl 5-phosphate + ADP. It participates in amino-acid biosynthesis; L-proline biosynthesis; L-glutamate 5-semialdehyde from L-glutamate: step 1/2. In terms of biological role, catalyzes the transfer of a phosphate group to glutamate to form L-glutamate 5-phosphate. This is Glutamate 5-kinase from Janthinobacterium sp. (strain Marseille) (Minibacterium massiliensis).